An 858-amino-acid chain; its full sequence is Translation initiation factor IF-2 (858 aa).

The segment at 49–271 is disordered; the sequence is TTTVTHPKSQ…NKPAPVRKDK (223 aa). A compositionally biased stretch (low complexity) spans 80–226; that stretch reads NQQQSNSRHQ…RFGGSLNSNN (147 aa). Residues 239–256 are compositionally biased toward basic residues; the sequence is NRRRNNRNNKSRNNKNQR. One can recognise a tr-type G domain in the interval 359–528; sequence PRAPVVTVMG…LLQSEVLELT (170 aa). The tract at residues 368-375 is G1; sequence GHVDHGKT. 368–375 contributes to the GTP binding site; sequence GHVDHGKT. The segment at 393 to 397 is G2; sequence GITQA. Positions 414-417 are G3; it reads DTPG. Residues 414 to 418 and 468 to 471 contribute to the GTP site; these read DTPGH and NKID. The interval 468-471 is G4; the sequence is NKID. The interval 504–506 is G5; it reads SAK.

It belongs to the TRAFAC class translation factor GTPase superfamily. Classic translation factor GTPase family. IF-2 subfamily.

It is found in the cytoplasm. Functionally, one of the essential components for the initiation of protein synthesis. Protects formylmethionyl-tRNA from spontaneous hydrolysis and promotes its binding to the 30S ribosomal subunits. Also involved in the hydrolysis of GTP during the formation of the 70S ribosomal complex. The protein is Translation initiation factor IF-2 of Lactiplantibacillus plantarum (strain ATCC BAA-793 / NCIMB 8826 / WCFS1) (Lactobacillus plantarum).